We begin with the raw amino-acid sequence, 252 residues long: uncharacterized protein (252 aa).

Phosphoserine is present on residues Ser-195 and Ser-209.

As to expression, testis-specific. Highly expressed in spermatocytes (at protein level).

In terms of biological role, essential for normal spermatogenesis and male fertility. This is an uncharacterized protein from Mus musculus (Mouse).